Consider the following 273-residue polypeptide: 4-hydroxy-tetrahydrodipicolinate reductase (273 aa).

Residues 12–17 (GAGGRM) and Glu-38 each bind NAD(+). Arg-39 lines the NADP(+) pocket. NAD(+) contacts are provided by residues 102 to 104 (GTT) and 126 to 129 (AANF). His-159 functions as the Proton donor/acceptor in the catalytic mechanism. His-160 is a (S)-2,3,4,5-tetrahydrodipicolinate binding site. The active-site Proton donor is the Lys-163. 169 to 170 (GT) provides a ligand contact to (S)-2,3,4,5-tetrahydrodipicolinate.

The protein belongs to the DapB family. As to quaternary structure, homotetramer.

The protein resides in the cytoplasm. The enzyme catalyses (S)-2,3,4,5-tetrahydrodipicolinate + NAD(+) + H2O = (2S,4S)-4-hydroxy-2,3,4,5-tetrahydrodipicolinate + NADH + H(+). It catalyses the reaction (S)-2,3,4,5-tetrahydrodipicolinate + NADP(+) + H2O = (2S,4S)-4-hydroxy-2,3,4,5-tetrahydrodipicolinate + NADPH + H(+). It participates in amino-acid biosynthesis; L-lysine biosynthesis via DAP pathway; (S)-tetrahydrodipicolinate from L-aspartate: step 4/4. In terms of biological role, catalyzes the conversion of 4-hydroxy-tetrahydrodipicolinate (HTPA) to tetrahydrodipicolinate. The chain is 4-hydroxy-tetrahydrodipicolinate reductase from Shigella flexneri.